Consider the following 318-residue polypeptide: Strigolactone esterase D14 (318 aa).

A compositionally biased stretch (pro residues) spans 1 to 11 (MLRSTHPPPSS). The segment at 1–48 (MLRSTHPPPSSPSSSSSGGGGGGGSSASSSSEKTMVGGGGGGGGGSGS) is disordered. Positions 36-47 (VGGGGGGGGGSG) are enriched in gly residues. The active-site Nucleophile is S147. Substrate is bound by residues S147 and C241. Catalysis depends on residues D268 and H297. H297 contacts substrate.

This sequence belongs to the AB hydrolase superfamily. Interacts with D53. The interaction between D53 and D14 is enhanced in the presence of strigolactones. The interaction with D53 occurs in the presence of (2'R) stereoisomers of strigolactones, but not (2'S) stereoisomers. Interacts with SLR1 in a strigolactone-dependent manner. Interacts with D3 in a strigolactone-dependent manner. As to expression, expressed in the parenchyma cells of the root stele and lateral roots, vascular tissues of vein and leaf sheath, ligule base, auricle base and stem base.

It is found in the cytoplasm. The protein localises to the nucleus. Involved in strigolactone (SL) signaling pathway. May function downstream of SL synthesis, as a component of hormone signaling or as an enzyme that participates in the conversion of SL to the bioactive form. Strigolactones are hormones that inhibit tillering and shoot branching through the MAX-dependent pathway, contribute to the regulation of shoot architectural response to phosphate-limiting conditions and function as rhizosphere signal that stimulates hyphal branching of arbuscular mycorrhizal fungi and trigger seed germination of root parasitic weeds. Strigolactone-dependent association of D14 with D3 and D53 (a repressor of SL signaling) triggers D53 ubiquitination and degradation. Hydrolyzes the butenolide ring of SLs. A reaction product D-OH is trapped in the cavity of D14, inducing the interaction with SLR1, and probably with other proteins such as D3 and D53. Contributes to the negative regulation of gibberellin signaling. The protein is Strigolactone esterase D14 of Oryza sativa subsp. japonica (Rice).